Reading from the N-terminus, the 89-residue chain is Small ribosomal subunit protein uS15 (89 aa).

It belongs to the universal ribosomal protein uS15 family. As to quaternary structure, part of the 30S ribosomal subunit. Forms a bridge to the 50S subunit in the 70S ribosome, contacting the 23S rRNA.

In terms of biological role, one of the primary rRNA binding proteins, it binds directly to 16S rRNA where it helps nucleate assembly of the platform of the 30S subunit by binding and bridging several RNA helices of the 16S rRNA. Forms an intersubunit bridge (bridge B4) with the 23S rRNA of the 50S subunit in the ribosome. The polypeptide is Small ribosomal subunit protein uS15 (Cupriavidus necator (strain ATCC 17699 / DSM 428 / KCTC 22496 / NCIMB 10442 / H16 / Stanier 337) (Ralstonia eutropha)).